Here is a 444-residue protein sequence, read N- to C-terminus: Adenylosuccinate synthetase (444 aa).

GTP-binding positions include Gly-12 to Lys-18 and Gly-40 to Thr-42. Residue Asp-13 is the Proton acceptor of the active site. Asp-13 and Gly-40 together coordinate Mg(2+). Residues Asp-13–Lys-16, Asn-38–His-41, Thr-128, Arg-142, Gln-223, Thr-238, and Arg-302 each bind IMP. Catalysis depends on His-41, which acts as the Proton donor. Substrate is bound at residue Thr-298 to Arg-304. GTP contacts are provided by residues Arg-304, Lys-330–Asp-332, and Ser-412–Gly-414.

Belongs to the adenylosuccinate synthetase family. In terms of assembly, homodimer. The cofactor is Mg(2+).

The protein resides in the cytoplasm. It carries out the reaction IMP + L-aspartate + GTP = N(6)-(1,2-dicarboxyethyl)-AMP + GDP + phosphate + 2 H(+). The protein operates within purine metabolism; AMP biosynthesis via de novo pathway; AMP from IMP: step 1/2. Plays an important role in the de novo pathway of purine nucleotide biosynthesis. Catalyzes the first committed step in the biosynthesis of AMP from IMP. The polypeptide is Adenylosuccinate synthetase (Synechococcus elongatus (strain ATCC 33912 / PCC 7942 / FACHB-805) (Anacystis nidulans R2)).